We begin with the raw amino-acid sequence, 270 residues long: Probable feruloyl esterase C (270 aa).

An N-terminal signal peptide occupies residues 1–21 (MIKSIILQAIMVLSTLTSVHG). Residue Asn23 is glycosylated (N-linked (GlcNAc...) asparagine).

It belongs to the faeC family.

Its subcellular location is the secreted. The catalysed reaction is feruloyl-polysaccharide + H2O = ferulate + polysaccharide.. Its function is as follows. Involved in degradation of plant cell walls. Hydrolyzes the feruloyl-arabinose ester bond in arabinoxylans, and the feruloyl-galactose ester bond in pectin. Active against paranitrophenyl-acetate, methyl ferulate and wheat arabinoxylan. The protein is Probable feruloyl esterase C (faeC) of Aspergillus oryzae (strain ATCC 42149 / RIB 40) (Yellow koji mold).